Consider the following 545-residue polypeptide: uncharacterized protein (545 aa).

2 stretches are compositionally biased toward basic and acidic residues: residues 34–44 (PMNKQNEKLKT) and 53–63 (PRNDYSRRVSR). 3 disordered regions span residues 34–98 (PMNK…PESN), 269–296 (QNGT…PQDS), and 415–444 (ERPQ…SAPE). Over residues 69–78 (TDSSEQQITA) the composition is skewed to polar residues. Basic and acidic residues predominate over residues 415–428 (ERPQRKTEHVKTPE). The span at 429–441 (ENLQTKNPTTMTS) shows a compositional bias: polar residues.

This is an uncharacterized protein from Mus musculus (Mouse).